The sequence spans 146 residues: Hemoglobin subunit beta (146 aa).

At V1 the chain carries N-acetylvaline. The Globin domain maps to 2–146 (HLTPDEKNAV…VANALAHKYH (145 aa)). T12 carries the phosphothreonine modification. Position 44 is a phosphoserine (S44). At K59 the chain carries N6-acetyllysine. Residue H63 coordinates heme b. At K82 the chain carries N6-acetyllysine. Residue H92 participates in heme b binding. Position 93 is an S-nitrosocysteine (C93). Position 144 is an N6-acetyllysine (K144).

It belongs to the globin family. Heterotetramer of two alpha chains and two beta chains. As to expression, red blood cells.

Its function is as follows. Involved in oxygen transport from the lung to the various peripheral tissues. In Piliocolobus badius (Western red colobus), this protein is Hemoglobin subunit beta (HBB).